A 62-amino-acid chain; its full sequence is Large ribosomal subunit protein eL24 (62 aa).

The Zn(2+) site is built by C6, C9, C32, and C36. A C4-type zinc finger spans residues 6–36 (CSFCEGKIEPGCGKKYVKKDGSVMQFCSSKC).

This sequence belongs to the eukaryotic ribosomal protein eL24 family. As to quaternary structure, part of the 50S ribosomal subunit. Forms a cluster with proteins L3 and L14. Zn(2+) serves as cofactor.

Binds to the 23S rRNA. This chain is Large ribosomal subunit protein eL24, found in Methanococcus vannielii (strain ATCC 35089 / DSM 1224 / JCM 13029 / OCM 148 / SB).